A 591-amino-acid chain; its full sequence is ATPase family AAA domain-containing protein 3A (591 aa).

Residues 1-52 (MSWLFGIKGPKGEGTGPPLPLPPAQPGAEGGGDRGAGDRPSPKDKWSNFDPT) form a disordered region. Residue Ser-2 is modified to N-acetylserine. Positions 2–49 (SWLFGIKGPKGEGTGPPLPLPPAQPGAEGGGDRGAGDRPSPKDKWSNF) are required for interaction with the inner surface of the mitochondrial outer membrane. Topologically, residues 2-245 (SWLFGIKGPK…FRAFVTDWDK (244 aa)) are mitochondrial intermembrane. A compositionally biased stretch (basic and acidic residues) spans 31-47 (GGDRGAGDRPSPKDKWS). Positions 55–216 (ERAAKAAREL…REQIRLKAAE (162 aa)) form a coiled coil. The helical transmembrane segment at 246–263 (VTATVAGLTLLAVGVYSA) threads the bilayer. Residues 264–586 (KNATSVAGRY…DSQTNKPPHP (323 aa)) are Mitochondrial matrix-facing. The interval 289–304 (RISVLEALRHPIQVSR) is S100B-binding. Residue 351 to 358 (GPPGTGKT) participates in ATP binding. An N6-acetyllysine; alternate modification is found at Lys-490. At Lys-490 the chain carries N6-succinyllysine; alternate. An N6-acetyllysine mark is found at Lys-494 and Lys-512. Residues 572 to 591 (KVERPDSQTNKPPHPSLLSC) form a disordered region.

The protein belongs to the AAA ATPase family. In terms of assembly, can form homooligomers. Homodimer formation at the N-terminus may be regulated by ATP and is required for the interaction with the inner surface of the mitochondrial outer membrane and correct mitochondrial homeostasis. Interacts with components of the mitochondrial ribosome and with other proteins involved in mitochondrial RNA metabolism. May also interact with protein involved in lipid metabolism, including STARD9. May interact with FAM210A. Interacts with GADD45GIP1. Interacts with S100B in a Ca(+2)- and Zn(+2)-dependent manner; this interaction probably occurs in the cytosol prior to mitochondrial targeting. S100B could assist ATAD3A cytoplasmic processing, preventing aggregation and favoring mitochondrial localization. Interacts with HSP60/HSPD1. Interacts with CLPB. Interacts with EIF2AK3/PERK; ATAD3A and EIF2S1/eIF-2-alpha occupy a common binding site within the cytoplasmic loop of EIF2AK3/PERK, leading to prevent EIF2AK3/PERK association with its substrate EIF2S1/eIF-2-alpha. Expressed in heart, spleen, kidney, liver and at smaller levels, in lung and muscle (at protein level).

The protein localises to the mitochondrion inner membrane. Its subcellular location is the mitochondrion matrix. It localises to the mitochondrion nucleoid. The catalysed reaction is ATP + H2O = ADP + phosphate + H(+). Essential for mitochondrial network organization, mitochondrial metabolism and cell growth at organism and cellular level. May play an important role in mitochondrial protein synthesis. May also participate in mitochondrial DNA replication. May bind to mitochondrial DNA D-loops and contribute to nucleoid stability. Required for enhanced channeling of cholesterol for hormone-dependent steroidogenesis. Involved in mitochondrial-mediated antiviral innate immunity. Required to protect mitochondria from the PERK-mediated unfolded protein response: specifically inhibits the activity of EIF2AK3/PERK at mitochondria-endoplasmic reticulum contact sites, thereby providing a safe haven for mitochondrial protein translation during endoplasmic reticulum stress. Ability to inhibit EIF2AK3/PERK is independent of its ATPase activity. Also involved in the mitochondrial DNA damage response by promoting signaling between damaged genomes and the mitochondrial membrane, leading to activation of the integrated stress response (ISR). The polypeptide is ATPase family AAA domain-containing protein 3A (Atad3a) (Mus musculus (Mouse)).